The following is a 498-amino-acid chain: L-ornithine N(5)-monooxygenase (498 aa).

FAD-binding positions include 80–88 and Q99; that span reads ERQKQFAWH. K104 serves as a coordination point for substrate. Residue V165 coordinates FAD. Residues 251–254 and R276 each bind NADP(+); that span reads SGQS. Residues 290–293 and N320 each bind substrate; that span reads NEVF. Residue 320-322 participates in NADP(+) binding; it reads NYS. 463–465 provides a ligand contact to FAD; sequence SLL. S466 lines the substrate pocket.

This sequence belongs to the lysine N(6)-hydroxylase/L-ornithine N(5)-oxygenase family. As to quaternary structure, homotetramer. The cofactor is FAD.

The catalysed reaction is L-ornithine + NADPH + O2 = N(5)-hydroxy-L-ornithine + NADP(+) + H2O. The enzyme catalyses L-ornithine + NADH + O2 = N(5)-hydroxy-L-ornithine + NAD(+) + H2O. It participates in siderophore biosynthesis. Catalyzes the conversion of L-ornithine to N(5)-hydroxyornithine, the first step in the biosynthesis of all hydroxamate-containing siderophores, such as the secreted triacetylfusarinine C (TAFC) involved in iron uptake and the intracellular iron storage compound desferriferricrocin (DFFC). The chain is L-ornithine N(5)-monooxygenase from Emericella nidulans (strain FGSC A4 / ATCC 38163 / CBS 112.46 / NRRL 194 / M139) (Aspergillus nidulans).